The primary structure comprises 599 residues: Putative ATP-dependent helicase YeeB (599 aa).

The Helicase ATP-binding domain occupies 30–207; sequence AFEKRNSQYL…LLPEDEELFD (178 aa). 43–50 lines the ATP pocket; the sequence is APPASGKS. Residues 154 to 157 carry the DEAH box motif; the sequence is DEFH. The Helicase C-terminal domain maps to 236–408; that stretch reads QYTSAINEVL…TVNTMLKAIS (173 aa).

The protein belongs to the helicase family.

The chain is Putative ATP-dependent helicase YeeB (yeeB) from Bacillus subtilis (strain 168).